The chain runs to 572 residues: MKQLLQQLLVQSLEVLMDNNILESMPENIRVDHSKDKAQGDFASNIAMLLSEQAQCSSKVLAQKIKANFPDSVDVEKIEIVGPGFINFFMSQSSNALVVEDIIKQGGNYGLSNIGMGQRVLLEFVSANPTGPLHVGHGRGVAYGAAVAHLLRAVGFEVDCEYYVNDAGRQMDILAISVYLRYVETEQFPDNCYKGDYIFDIAKKISGVKKLDIFTNTCKDTSEWKVQKNSIDKERYIDDLIANCKLQLGSDYRKVFDFAINSILSDIKIDLADFGVEYHQWFSEQSLVDSGLSEEIVKKLQDLGYIYEKEGALWFRTTDFGDDLDRVVVRDNGIHTYFSYDIAYHLGKFERGYDRIINIWGADHHGYIARVKASIKALNYNPDKLEILLVQFVNLFRDGKKVSMSTRSGSFITLKELREEVGNDVVRFFYILRKSTQHMDFNLDLAKSKSNENPVFYIQYAYVRICSVLKQGMPFMADIDLLVLNNELETLLIKELNRYKDILQSSALNYEPHVLACYLRKLAGYFHSYYNNCEFLVDDDKLRNSRLLLITAVQQILANGLNLLGISTPNSM.

The 'HIGH' region signature appears at 127–137 (ANPTGPLHVGH).

This sequence belongs to the class-I aminoacyl-tRNA synthetase family. As to quaternary structure, monomer.

The protein resides in the cytoplasm. It catalyses the reaction tRNA(Arg) + L-arginine + ATP = L-arginyl-tRNA(Arg) + AMP + diphosphate. The polypeptide is Arginine--tRNA ligase (Vesicomyosocius okutanii subsp. Calyptogena okutanii (strain HA)).